We begin with the raw amino-acid sequence, 487 residues long: 3-octaprenyl-4-hydroxybenzoate carboxy-lyase (487 aa).

Residue asparagine 172 coordinates Mn(2+). Prenylated FMN is bound by residues 175-177 (IYR), 189-191 (RWL), and 194-195 (RG). A Mn(2+)-binding site is contributed by glutamate 238. Catalysis depends on aspartate 287, which acts as the Proton donor.

This sequence belongs to the UbiD family. Homohexamer. Requires prenylated FMN as cofactor. Mn(2+) serves as cofactor.

It is found in the cell membrane. The catalysed reaction is a 4-hydroxy-3-(all-trans-polyprenyl)benzoate + H(+) = a 2-(all-trans-polyprenyl)phenol + CO2. It functions in the pathway cofactor biosynthesis; ubiquinone biosynthesis. Functionally, catalyzes the decarboxylation of 3-octaprenyl-4-hydroxy benzoate to 2-octaprenylphenol, an intermediate step in ubiquinone biosynthesis. The chain is 3-octaprenyl-4-hydroxybenzoate carboxy-lyase from Actinobacillus pleuropneumoniae serotype 7 (strain AP76).